The sequence spans 213 residues: Octanoyltransferase (213 aa).

One can recognise a BPL/LPL catalytic domain in the interval 32–207 (ENSHDEIWLV…NILALLNNPP (176 aa)). Substrate is bound by residues 71 to 78 (RGGQVTYH), 138 to 140 (SLG), and 151 to 153 (GLA). The active-site Acyl-thioester intermediate is Cys-169.

Belongs to the LipB family.

It localises to the cytoplasm. It catalyses the reaction octanoyl-[ACP] + L-lysyl-[protein] = N(6)-octanoyl-L-lysyl-[protein] + holo-[ACP] + H(+). Its pathway is protein modification; protein lipoylation via endogenous pathway; protein N(6)-(lipoyl)lysine from octanoyl-[acyl-carrier-protein]: step 1/2. Catalyzes the transfer of endogenously produced octanoic acid from octanoyl-acyl-carrier-protein onto the lipoyl domains of lipoate-dependent enzymes. Lipoyl-ACP can also act as a substrate although octanoyl-ACP is likely to be the physiological substrate. The protein is Octanoyltransferase of Salmonella paratyphi A (strain ATCC 9150 / SARB42).